Consider the following 43-residue polypeptide: Cytochrome b559 subunit beta (43 aa).

A helical membrane pass occupies residues 18–34; it reads WLSVHALGIPTIFFLGA. His22 is a binding site for heme.

This sequence belongs to the PsbE/PsbF family. In terms of assembly, heterodimer of an alpha subunit and a beta subunit. PSII is composed of 1 copy each of membrane proteins PsbA, PsbB, PsbC, PsbD, PsbE, PsbF, PsbH, PsbI, PsbJ, PsbK, PsbL, PsbM, PsbT, PsbX, PsbY, PsbZ, Psb30/Ycf12, at least 3 peripheral proteins of the oxygen-evolving complex and a large number of cofactors. It forms dimeric complexes. Requires heme b as cofactor.

It localises to the plastid. It is found in the chloroplast thylakoid membrane. This b-type cytochrome is tightly associated with the reaction center of photosystem II (PSII). PSII is a light-driven water:plastoquinone oxidoreductase that uses light energy to abstract electrons from H(2)O, generating O(2) and a proton gradient subsequently used for ATP formation. It consists of a core antenna complex that captures photons, and an electron transfer chain that converts photonic excitation into a charge separation. The protein is Cytochrome b559 subunit beta of Stigeoclonium helveticum (Green alga).